We begin with the raw amino-acid sequence, 915 residues long: Isoleucine--tRNA ligase (915 aa).

The 'HIGH' region motif lies at 57–67 (PYANGNLHMGH). E554 is a binding site for L-isoleucyl-5'-AMP. Positions 595–599 (KMSKS) match the 'KMSKS' region motif. K598 provides a ligand contact to ATP. C885, C888, C905, and C908 together coordinate Zn(2+).

It belongs to the class-I aminoacyl-tRNA synthetase family. IleS type 1 subfamily. Monomer. It depends on Zn(2+) as a cofactor.

It is found in the cytoplasm. It carries out the reaction tRNA(Ile) + L-isoleucine + ATP = L-isoleucyl-tRNA(Ile) + AMP + diphosphate. In terms of biological role, catalyzes the attachment of isoleucine to tRNA(Ile). As IleRS can inadvertently accommodate and process structurally similar amino acids such as valine, to avoid such errors it has two additional distinct tRNA(Ile)-dependent editing activities. One activity is designated as 'pretransfer' editing and involves the hydrolysis of activated Val-AMP. The other activity is designated 'posttransfer' editing and involves deacylation of mischarged Val-tRNA(Ile). This Staphylococcus carnosus (strain TM300) protein is Isoleucine--tRNA ligase.